A 320-amino-acid chain; its full sequence is Adhesin MafA 1 (320 aa).

Positions 1-18 (MQARLLIPILFSVFILSA) are cleaved as a signal peptide. Cysteine 19 carries the N-palmitoyl cysteine lipid modification. Cysteine 19 carries the S-diacylglycerol cysteine lipid modification. The tract at residues 288–320 (HMGNSAPSVEADNSHEGYGYSDEAVRRHRQGQP) is disordered.

Belongs to the MafA family.

Its subcellular location is the cell outer membrane. The sequence is that of Adhesin MafA 1 (mafA1) from Neisseria meningitidis serogroup A / serotype 4A (strain DSM 15465 / Z2491).